The sequence spans 133 residues: MTSSLALVLLLGGAAVCAELTLRGGYRERSNHQDDPKYLELAHYATSTWSAQQPGKTHFDTVVEVLKVETQTVAGTNYRLTLKVAESTCELTSTYSKDTCQANANAAHRTCTAVIYENLQGEKSVSSFECAAA.

The N-terminal stretch at 1-18 is a signal peptide; that stretch reads MTSSLALVLLLGGAAVCA. One can recognise a Cystatin domain in the interval 34–118; that stretch reads DDPKYLELAH…RTCTAVIYEN (85 aa).

Belongs to the cystatin family. Salivary gland, midgut and other tissues.

Its subcellular location is the secreted. Inhibitor of cysteine proteinases. Inhibits host cathepsin L (CTSL) and S (CTSS). Modulates production of various cytokines and chemokines in lipopolysaccharide (LPS)-stimulated mouse dendritic cell. Suppresses maturation of mouse bone-marrow-derived dendritic cells (BMDCs). In terms of biological role, (Microbial infection) Modulates Borrelia miyamotoi-stimulated immune responses in mice by suppressing activities of host dendritic and T-cells. This is Salivary cystatin-L2 from Ixodes persulcatus (Taiga tick).